We begin with the raw amino-acid sequence, 378 residues long: C-type lectin domain family 17, member A (378 aa).

Residues 1 to 119 form a disordered region; the sequence is MHNLYSITGY…PPLPCKPRNM (119 aa). Topologically, residues 1–172 are cytoplasmic; it reads MHNLYSITGY…GCCQKRWMVY (172 aa). Composition is skewed to acidic residues over residues 17–27, 43–53, and 69–79; these read MEEEEEDDDYE. Residues 86-101 are compositionally biased toward pro residues; it reads KDLPPKPGSSAPPRPP. A helical; Signal-anchor for type II membrane protein membrane pass occupies residues 173 to 193; it reads LCLLVVTSLFLGCLGLTVTLI. Topologically, residues 194–378 are extracellular; sequence KYQELMEELR…YWICERKCSC (185 aa). N-linked (GlcNAc...) asparagine glycans are attached at residues Asn-215 and Asn-237. Cystine bridges form between Cys-254-Cys-265, Cys-282-Cys-372, and Cys-350-Cys-364. The C-type lectin domain occupies 261 to 373; sequence FEGKCYYFSP…CYKTTYWICE (113 aa). Asn-285 carries an N-linked (GlcNAc...) asparagine glycan. Residues Glu-341, Asn-343, Glu-348, Asn-360, and Asp-361 each contribute to the Ca(2+) site.

In terms of assembly, oligomer; disulfide-linked. In terms of processing, phosphorylated on tyrosine residues. In terms of tissue distribution, expressed on dividing B-cells of germinal centers in various tissues, including lymph nodes, tonsils, stomach, intestine, appendix and spleen.

The protein localises to the membrane. Cell surface receptor which may be involved in carbohydrate-mediated communication between cells in the germinal center. Binds glycans with terminal alpha-linked mannose or fucose residues. This is C-type lectin domain family 17, member A (CLEC17A) from Homo sapiens (Human).